The primary structure comprises 1574 residues: Synaptojanin-1 (1574 aa).

The SAC domain occupies 119 to 442 (VRKVLNSGNF…GDSISKIYAG (324 aa)). A catalytic region spans residues 500–899 (GSLRVSEQTL…GPPDGTVLVS (400 aa)). 2 positions are modified to phosphoserine: Ser820 and Ser830. Positions 894–971 (GTVLVSIKSS…RTITITLKSP (78 aa)) constitute an RRM domain. The span at 1029–1054 (HLQPSSSSGLGTSPSSSPRTSPCQSP) shows a compositional bias: low complexity. The disordered stretch occupies residues 1029–1327 (HLQPSSSSGL…GVKQEPTLKS (299 aa)). Ser1053 carries the phosphoserine modification. Residues 1090–1100 (PAAQKESSQTI) are compositionally biased toward polar residues. The span at 1105–1127 (PPPPRPVAPPARPAPPQRPPPPS) shows a compositional bias: pro residues. Phosphoserine is present on residues Ser1147 and Ser1175. Arg1198 carries the post-translational modification Omega-N-methylarginine. Thr1217 is modified (phosphothreonine). Positions 1287 to 1310 (SRSSQSLPSDSSPQLQQEQPTGQQ) are enriched in low complexity. A phosphoserine mark is found at Ser1289 and Ser1350. Residue Thr1354 is modified to Phosphothreonine. 2 disordered regions span residues 1382–1519 (TMPP…SFDD) and 1532–1574 (LPAR…FTER). The span at 1389–1413 (QSKSQESVGSSANPFPSLPTRNPFT) shows a compositional bias: polar residues. A run of 3 repeats spans residues 1401 to 1403 (NPF), 1410 to 1412 (NPF), and 1421 to 1423 (NPF). A 3 X 3 AA repeats of N-P-F region spans residues 1401-1423 (NPFPSLPTRNPFTDRTAAPGNPF). Polar residues-rich tracts occupy residues 1424–1436 (RVQS…TSWL) and 1472–1484 (DLQS…TSNP). The segment covering 1535–1548 (RRPPPPPPPVPLLP) has biased composition (pro residues). The segment covering 1549 to 1563 (PGTTSSAGPSTTLSS) has biased composition (low complexity). Position 1566 is a phosphoserine (Ser1566).

Belongs to the synaptojanin family. It in the central section; belongs to the inositol 1,4,5-trisphosphate 5-phosphatase family. In terms of assembly, interacts with ASH/GRB2. Interacts with PACSIN1, PACSIN2 and PACSIN3. Interacts with AMPH, SH3GL1, SH3GL2 and SH3GL3. Interacts with MYO1E (via SH3 domain). Interacts with BIN1 and DNM1. Interacts with EPS15. In terms of tissue distribution, found in neonatal brain, and in a wide variety of adult non-neuronal tissues. Concentrated at clathrin-coated endocytic intermediates in nerve terminals. Also detected in the lung and heart. Expressed at higher levels than isoform 2 in the testis and liver and is not detected in the skeletal muscle. Expressed predominantly in the neurons, but is also found in all other tissues at much lower levels. Also detected in the lung and heart. Epressed at lower levels than isoform 1 in the testis and liver and is not detected in the skeletal muscle. As to expression, expressed in the brain.

Its subcellular location is the membrane. The protein localises to the cytoplasm. It localises to the perinuclear region. The enzyme catalyses a 1,2-diacyl-sn-glycero-3-phospho-(1D-myo-inositol-4,5-bisphosphate) + H2O = a 1,2-diacyl-sn-glycero-3-phospho-(1D-myo-inositol 4-phosphate) + phosphate. Its function is as follows. Phosphatase that acts on various phosphoinositides, including phosphatidylinositol 4-phosphate, phosphatidylinositol (4,5)-bisphosphate and phosphatidylinositol (3,4,5)-trisphosphate. Has a role in clathrin-mediated endocytosis. Hydrolyzes PIP2 bound to actin regulatory proteins resulting in the rearrangement of actin filaments downstream of tyrosine kinase and ASH/GRB2. In Rattus norvegicus (Rat), this protein is Synaptojanin-1 (Synj1).